A 77-amino-acid chain; its full sequence is Large ribosomal subunit protein eL20 (77 aa).

This sequence belongs to the eukaryotic ribosomal protein eL20 family. In terms of assembly, part of the 50S ribosomal subunit. Binds 23S rRNA.

This chain is Large ribosomal subunit protein eL20, found in Thermococcus gammatolerans (strain DSM 15229 / JCM 11827 / EJ3).